We begin with the raw amino-acid sequence, 214 residues long: MRVRYKPWAEDYLKDHPELVDMEGQHAGKMTEWFDKTQPIHIEIGSGMGQFITTLAAQNPHINYISMEREKSIVYKVLDKVKEMGLTNLKIICNDAIELNEYFKDGEVSRIYLNFSDPWPKNRHAKRRLTYHTFLALYQQILNDEGDLHFKTDNRGLFAYSLESMSQFGMYFTKINLNLHQEDDGSNILTEYEKKFSDKGSRIYRMEAKFHSQK.

Glu43, Glu68, Asp95, and Asp117 together coordinate S-adenosyl-L-methionine. Asp117 is an active-site residue. Substrate contacts are provided by residues Lys121, Asp153, and 190–193; that span reads TEYE.

The protein belongs to the class I-like SAM-binding methyltransferase superfamily. TrmB family.

The catalysed reaction is guanosine(46) in tRNA + S-adenosyl-L-methionine = N(7)-methylguanosine(46) in tRNA + S-adenosyl-L-homocysteine. It functions in the pathway tRNA modification; N(7)-methylguanine-tRNA biosynthesis. Functionally, catalyzes the formation of N(7)-methylguanine at position 46 (m7G46) in tRNA. The polypeptide is tRNA (guanine-N(7)-)-methyltransferase (Staphylococcus aureus (strain JH1)).